We begin with the raw amino-acid sequence, 1036 residues long: Phytosulfokine receptor 2 (1036 aa).

The first 16 residues, 1–16 (MVIILLLVFFVGSSVS), serve as a signal peptide directing secretion. 2 N-linked (GlcNAc...) asparagine glycosylation sites follow: Asn-36 and Asn-45. 17 LRR repeats span residues 89-111 (ELRV…ISKL), 113-136 (QLQV…SGLK), 137-159 (LIQS…GVFP), 160-182 (GLVM…LCSS), 185-207 (GIQV…YNCS), 209-231 (SIQQ…LYSI), 233-256 (ELEQ…SNLS), 257-279 (GLKS…FGNL), 281-303 (QLEH…LSQC), 305-326 (KLRV…NFTG), 329-351 (DLCV…LGHC), 353-375 (KMKI…FKNL), 377-398 (SLLF…MNVL), 403-423 (NLST…NNVT), 427-450 (NLAI…LNCK), 451-473 (KLEV…IGKM), and 475-498 (SLFY…TELK). Asn-142, Asn-165, and Asn-205 each carry an N-linked (GlcNAc...) asparagine glycan. 3 N-linked (GlcNAc...) asparagine glycosylation sites follow: Asn-251, Asn-254, and Asn-278. Asn-313 and Asn-323 each carry an N-linked (GlcNAc...) asparagine glycan. Residues Asn-385, Asn-403, and Asn-421 are each glycosylated (N-linked (GlcNAc...) asparagine). Residues Asn-483, Asn-504, Asn-523, Asn-549, and Asn-571 are each glycosylated (N-linked (GlcNAc...) asparagine). 2 LRR repeats span residues 561–583 (ELHM…ISGL) and 585–606 (NLEV…SFQS). The helical transmembrane segment at 680–700 (IVVLTISLAIGITLLLSVILL) threads the bilayer. The residue at position 751 (Thr-751) is a Phosphothreonine. Residues 754–1025 (FSQANIIGCG…PLIEEVVTWL (272 aa)) form the Protein kinase domain. ATP contacts are provided by residues 760 to 768 (IGCGGFGLV) and Lys-782. 2 positions are modified to phosphotyrosine: Tyr-827 and Tyr-867. Asp-880 functions as the Proton acceptor in the catalytic mechanism. At Tyr-922 the chain carries Phosphotyrosine. The stretch at 995–1020 (RTVLEMLEIACKCIDHEPRRRPLIEE) is one LRR 20 repeat.

The protein belongs to the protein kinase superfamily. Ser/Thr protein kinase family.

It localises to the cell membrane. It catalyses the reaction L-seryl-[protein] + ATP = O-phospho-L-seryl-[protein] + ADP + H(+). The catalysed reaction is L-threonyl-[protein] + ATP = O-phospho-L-threonyl-[protein] + ADP + H(+). Its function is as follows. Phytosulfokine receptor with a serine/threonine-protein kinase activity. The sequence is that of Phytosulfokine receptor 2 (PSKR2) from Arabidopsis thaliana (Mouse-ear cress).